Consider the following 408-residue polypeptide: LL-diaminopimelate aminotransferase (408 aa).

Substrate-binding residues include Tyr15 and Gly42. Pyridoxal 5'-phosphate-binding positions include Tyr72, 108 to 109, Tyr132, Asn187, Tyr218, and 246 to 248; these read SK and SFS. Positions 109, 132, and 187 each coordinate substrate. Lys249 is modified (N6-(pyridoxal phosphate)lysine). The pyridoxal 5'-phosphate site is built by Arg257 and Asn292. Positions 292 and 388 each coordinate substrate.

Belongs to the class-I pyridoxal-phosphate-dependent aminotransferase family. LL-diaminopimelate aminotransferase subfamily. As to quaternary structure, homodimer. Pyridoxal 5'-phosphate serves as cofactor.

The enzyme catalyses (2S,6S)-2,6-diaminopimelate + 2-oxoglutarate = (S)-2,3,4,5-tetrahydrodipicolinate + L-glutamate + H2O + H(+). Its pathway is amino-acid biosynthesis; L-lysine biosynthesis via DAP pathway; LL-2,6-diaminopimelate from (S)-tetrahydrodipicolinate (aminotransferase route): step 1/1. Functionally, involved in the synthesis of meso-diaminopimelate (m-DAP or DL-DAP), required for both lysine and peptidoglycan biosynthesis. Catalyzes the direct conversion of tetrahydrodipicolinate to LL-diaminopimelate. This chain is LL-diaminopimelate aminotransferase, found in Prochlorococcus marinus (strain SARG / CCMP1375 / SS120).